The sequence spans 524 residues: 12S seed storage protein CRC (524 aa).

The first 23 residues, 1–23 (MVKLSNLLVATFGVLLVLNGCLA), serve as a signal peptide directing secretion. A disulfide bond links C37 and C70. Cupin type-1 domains follow at residues 42–289 (LDVL…QLAQ) and 346–495 (ENID…EEAR). S53 bears the Phosphoserine mark. Y78 is modified (phosphotyrosine). S97 carries the post-translational modification Phosphoserine. A disulfide bridge links C113 with C340. The residue at position 116 (T116) is a Phosphothreonine. Residues 119-190 (DSQPMQGQQQ…QGQQGQQGFR (72 aa)) form a disordered region. A compositionally biased stretch (low complexity) spans 124–188 (QGQQQGQPWQ…EGQGQQGQQG (65 aa)). Phosphoserine occurs at positions 259 and 366. T459 carries the phosphothreonine modification. S484 carries the phosphoserine modification. T501 carries the post-translational modification Phosphothreonine.

It belongs to the 11S seed storage protein (globulins) family. In terms of assembly, hexamer; each subunit is composed of an acidic and a basic chain derived from a single precursor and linked by a disulfide bond. Post-translationally, proteolytically processed during seed maturation at a conserved Asn-Gly peptide bond by an asparaginyl endopeptidase to produce two mature polypeptides referred to as alpha and beta subunits that are joined together by a disulfide bond. Phosphorylated in seeds on some Tyr residues in response to abscisic acid (ABA). As to expression, accumulates in seeds 8 days after anthesis.

The protein resides in the protein storage vacuole. Its function is as follows. Seed storage protein. The protein is 12S seed storage protein CRC (CRC) of Arabidopsis thaliana (Mouse-ear cress).